Here is a 328-residue protein sequence, read N- to C-terminus: D-cysteine desulfhydrase (328 aa).

The residue at position 51 (K51) is an N6-(pyridoxal phosphate)lysine.

This sequence belongs to the ACC deaminase/D-cysteine desulfhydrase family. Homodimer. Requires pyridoxal 5'-phosphate as cofactor.

The catalysed reaction is D-cysteine + H2O = hydrogen sulfide + pyruvate + NH4(+) + H(+). Its function is as follows. Catalyzes the alpha,beta-elimination reaction of D-cysteine and of several D-cysteine derivatives. It could be a defense mechanism against D-cysteine. The chain is D-cysteine desulfhydrase from Salmonella paratyphi C (strain RKS4594).